Here is a 73-residue protein sequence, read N- to C-terminus: Conotoxin Vc6.17 (73 aa).

Residues 1–19 (MQKLIILLLVAAVLMSTQA) form the signal peptide. Positions 20–44 (LFQEKRRKEKIDLLSKRKTDAEKQH) are excised as a propeptide. 3 disulfides stabilise this stretch: C48–C62, C55–C66, and C61–C71.

This sequence belongs to the conotoxin O2 superfamily. As to expression, expressed by the venom duct.

It localises to the secreted. In terms of biological role, inhibits voltage-gated ion channels. This is Conotoxin Vc6.17 from Conus victoriae (Queen Victoria cone).